The following is a 2919-amino-acid chain: Cadherin EGF LAG seven-pass G-type receptor 2 (2919 aa).

The signal sequence occupies residues 1-31; it reads MRSRAASAPLPTPLLPLLLLLLLLPPSPLLG. The Extracellular portion of the chain corresponds to 32–2380; it reads DQVGPCRSLG…GEILPLKTLT (2349 aa). A disordered region spans residues 156–194; sequence LRAGEGSPEESLGGRRKRNVNTAPQFQPPSYQATVPENQ. Polar residues predominate over residues 175 to 194; sequence VNTAPQFQPPSYQATVPENQ. Cadherin domains follow at residues 182–289, 290–399, 400–505, 506–610, 611–712, 713–815, 816–921, 922–1023, and 1028–1146; these read QPPS…DPVF, EQQE…APQF, SEKR…APIF, VSTP…NPTF, TQPE…RPVF, QSSH…APQF, LRDS…PPVF, EQDE…PPVL, and ILFN…SPLL. N-linked (GlcNAc...) asparagine glycans are attached at residues asparagine 486, asparagine 557, and asparagine 701. Asparagine 1036, asparagine 1076, asparagine 1182, and asparagine 1212 each carry an N-linked (GlcNAc...) asparagine glycan. One can recognise an EGF-like 1; atypical domain in the interval 1228 to 1286; sequence DDNICLREPCENYMRCVSVLRFDSSAPFIASSSVLFRPIHPVGGLRCRCPPGFTGDYCE. Positions 1288-1318 constitute an EGF-like 2; calcium-binding domain; sequence EVDLCYSRPCGPHGRCRSREGGYTCLCLDGY. Cystine bridges form between cysteine 1292–cysteine 1303, cysteine 1297–cysteine 1312, cysteine 1314–cysteine 1323, cysteine 1332–cysteine 1343, cysteine 1337–cysteine 1353, and cysteine 1355–cysteine 1365. Residues 1328 to 1366 form the EGF-like 3; calcium-binding domain; it reads HSGRCTPGVCKNGGTCVNLLVGGFKCDCPSGDFEKPFCQ. The region spanning 1367 to 1571 is the Laminin G-like 1 domain; it reads VTTRSFPARS…IANNGTVPGC (205 aa). N-linked (GlcNAc...) asparagine glycosylation is found at asparagine 1501 and asparagine 1565. 4 cysteine pairs are disulfide-bonded: cysteine 1545–cysteine 1571, cysteine 1578–cysteine 1589, cysteine 1583–cysteine 1598, and cysteine 1600–cysteine 1609. One can recognise an EGF-like 4; calcium-binding domain in the interval 1574-1610; that stretch reads KKIVCDSSICHNGGTCVNQWNAFSCECPLGFGGKSCA. Asparagine 1591 is subject to (3R)-3-hydroxyasparagine. Residues 1614–1791 form the Laminin G-like 2 domain; the sequence is ANPQRFLGSS…GESINVEPGC (178 aa). A glycan (N-linked (GlcNAc...) asparagine) is linked at asparagine 1741. An EGF-like 5; calcium-binding domain is found at 1787–1829; that stretch reads VEPGCSWPDPCDSNPCPTNSYCSNDWDSYSCSCVLGYYGDNCT. Cystine bridges form between cysteine 1791/cysteine 1802, cysteine 1797/cysteine 1817, cysteine 1819/cysteine 1828, cysteine 1832/cysteine 1843, cysteine 1837/cysteine 1855, cysteine 1857/cysteine 1866, cysteine 1887/cysteine 1899, cysteine 1889/cysteine 1906, cysteine 1908/cysteine 1921, cysteine 1924/cysteine 1936, cysteine 1926/cysteine 1943, cysteine 1945/cysteine 1954, and cysteine 1957/cysteine 1969. A glycan (N-linked (GlcNAc...) asparagine) is linked at asparagine 1827. One can recognise an EGF-like 6; calcium-binding domain in the interval 1830–1867; that stretch reads NVCDLNPCEHQSVCTRKPNTPHGYICECLPNYLGPYCE. Residues 1883–1922 enclose the EGF-like 7; calcium-binding domain; the sequence is TCGPCNCDVSKGFDPDCNKTSGECHCKENHYRPPGSPTCL. An N-linked (GlcNAc...) asparagine glycan is attached at asparagine 1900. A Laminin EGF-like domain is found at 1924–1971; it reads CDCYPTGSLSRVCDPEDGQCPCKPGVIGRQCDRCDNPFAEVTTNGCEV. Asparagine 2024, asparagine 2043, and asparagine 2061 each carry an N-linked (GlcNAc...) asparagine glycan. A GAIN-B domain is found at 2199 to 2369; the sequence is ETTVILPESV…AVLMDMSRRE (171 aa). The disordered stretch occupies residues 2216 to 2241; sequence VRSAGPGEAQETEELARRQRRHPELS. 2 disulfides stabilise this stretch: cysteine 2319–cysteine 2351 and cysteine 2339–cysteine 2353. Positions 2319–2369 are GPS; sequence CVFWNHSILVSGTGGWSARGCEVVFRNESHVSCQCNHMTSFAVLMDMSRRE. Asparagine 2323 and asparagine 2345 each carry an N-linked (GlcNAc...) asparagine glycan. The chain crosses the membrane as a helical span at residues 2381–2401; the sequence is YVALGVTLAALMLTFLFLTLL. Topologically, residues 2402-2413 are cytoplasmic; sequence RALRSNQHGIRR. The helical transmembrane segment at 2414–2433 threads the bilayer; that stretch reads NLTAALGLAQLVFLLGINQA. The Extracellular segment spans residues 2434 to 2438; that stretch reads DLPFA. A helical transmembrane segment spans residues 2439–2459; it reads CTVIAILLHFLYLCTFSWALL. Residues 2460-2480 are Cytoplasmic-facing; sequence EALHLYRALTEVRDVNASPMR. Residues 2481-2501 traverse the membrane as a helical segment; it reads FYYMLGWGVPAFITGLAVGLD. The Extracellular segment spans residues 2502–2518; sequence PEGYGNPDFCWLSVYDT. A helical membrane pass occupies residues 2519–2539; the sequence is LIWSFAGPVAFAVSMSVFLYI. The Cytoplasmic segment spans residues 2540–2563; it reads LSARASCAAQRQGFEKKGPVSGLR. The chain crosses the membrane as a helical span at residues 2564–2584; the sequence is SSFTVLLLLSATWLLALLSVN. Residues 2585–2591 lie on the Extracellular side of the membrane; sequence SDTLLFH. A helical transmembrane segment spans residues 2592 to 2612; that stretch reads YLFAACNCVQGPFIFLSYVVL. Residues 2613 to 2919 are Cytoplasmic-facing; that stretch reads SKEVRKALKF…SEFLFFNFLH (307 aa). A disordered region spans residues 2690–2884; it reads LNPGQVPPGL…PPRPPPRQSL (195 aa). The span at 2718–2730 shows a compositional bias: acidic residues; it reads TDSDSDLSLEDDQ. Polar residues predominate over residues 2791–2800; sequence GTTTKENSGS. The segment covering 2803–2815 has biased composition (basic and acidic residues); that stretch reads LEERPRENGDALT. Residues 2857–2868 are compositionally biased toward low complexity; it reads GTGSSRGSSISE.

Belongs to the G-protein coupled receptor 2 family. LN-TM7 subfamily. As to quaternary structure, heterodimer of 2 chains generated by proteolytic processing; the large extracellular N-terminal fragment and the membrane-bound C-terminal fragment predominantly remain associated and non-covalently linked. Post-translationally, the iron and 2-oxoglutarate dependent 3-hydroxylation of aspartate and asparagine is (R) stereospecific within EGF domains. In terms of processing, autoproteolytically processed at the GPS region of the GAIN-B domain; this cleavage modulates receptor activity. Expressed in the CNS and in the eye.

The protein resides in the cell membrane. Its function is as follows. Receptor that may have an important role in cell/cell signaling during nervous system formation. The chain is Cadherin EGF LAG seven-pass G-type receptor 2 from Mus musculus (Mouse).